A 1512-amino-acid polypeptide reads, in one-letter code: Mitogen-activated protein kinase kinase kinase 1 (1512 aa).

The span at 1-13 (MAAAAGNRASSSG) shows a compositional bias: low complexity. Disordered stretches follow at residues 1–37 (MAAAAGNRASSSGFPGARATSPEAGGGGGALKASSAP), 67–181 (SVEL…DRPE), and 213–304 (VKPI…PEET). Ala-2 carries the post-translational modification N-acetylalanine. A phosphoserine mark is found at Ser-21 and Ser-35. 3 stretches are compositionally biased toward low complexity: residues 81-99 (AASPPASSTSPSPEPADAA), 129-142 (AAPDSGASSPAAAE), and 150-160 (AAEPSPAAAPA). Phosphoserine is present on residues Ser-137 and Ser-154. Positions 162–181 (REMENKETLKGLHKMDDRPE) are enriched in basic and acidic residues. Residues 250 to 260 (SPSPGNSPSGR) show a composition bias toward low complexity. Position 275 is a phosphoserine (Ser-275). Thr-285 carries the post-translational modification Phosphothreonine. Ser-292, Ser-297, and Ser-300 each carry phosphoserine. An SWIM-type zinc finger spans residues 338–366 (YRVFIGPQNCSCARGTFCIHLLFVMLRVF). Low complexity predominate over residues 416–433 (SNSHTLSSSSTSTSSSEN). Positions 416-436 (SNSHTLSSSSTSTSSSENSIK) are disordered. The segment at 443–492 (CPICLLGMLDEESLTVCEDGCRNKLHHHCMSIWAEECRRNREPLICPLCR) adopts an RING-type zinc-finger fold. Residues Ser-507 and Ser-531 each carry the phosphoserine modification. 2 disordered regions span residues 511-532 (SPSSLRAAQQQTVQQQPLAGSR) and 602-624 (STGNSGGSSGSSPSGGATSGSSQ). Over residues 611–624 (GSSPSGGATSGSSQ) the composition is skewed to low complexity. The residue at position 923 (Ser-923) is a Phosphoserine. The interval 933–972 (SISVGPSSSTTTTTTTTEQPKPMVQTKGRPHSQCLNSSPL) is disordered. Low complexity predominate over residues 939–949 (SSSTTTTTTTT). Residue Ser-1018 is modified to Phosphoserine. A compositionally biased stretch (basic and acidic residues) spans 1032–1041 (NCPENKDSDK). A disordered region spans residues 1032–1087 (NCPENKDSDKLSPVFTQSRPLPSSNIHRPKPSRPTPGNTSKQGDPSKNSMTLDLNS). At Ser-1043 the chain carries Phosphoserine. Polar residues-rich tracts occupy residues 1045–1057 (VFTQSRPLPSSNI) and 1066–1087 (TPGNTSKQGDPSKNSMTLDLNS). A Protein kinase domain is found at 1243 to 1508 (WLKGQQIGLG…SRELLKHPVF (266 aa)). ATP contacts are provided by residues 1249-1257 (IGLGAFSSC) and Lys-1272. Catalysis depends on Asp-1369, which acts as the Proton acceptor. 2 positions are modified to phosphothreonine; by autocatalysis: Thr-1400 and Thr-1412.

The protein belongs to the protein kinase superfamily. STE Ser/Thr protein kinase family. MAP kinase kinase kinase subfamily. In terms of assembly, binds both upstream activators and downstream substrates in multimolecular complexes through its N-terminus. Oligomerizes after binding MAP2K4 or TRAF2. Interacts with AXIN1. Interacts (via the kinase catalytic domain) with STK38. Interacts with GRIPAP1. Requires Mg(2+) as cofactor. In terms of processing, autophosphorylated.

The catalysed reaction is L-seryl-[protein] + ATP = O-phospho-L-seryl-[protein] + ADP + H(+). It catalyses the reaction L-threonyl-[protein] + ATP = O-phospho-L-threonyl-[protein] + ADP + H(+). The enzyme catalyses S-ubiquitinyl-[E2 ubiquitin-conjugating enzyme]-L-cysteine + [acceptor protein]-L-lysine = [E2 ubiquitin-conjugating enzyme]-L-cysteine + N(6)-ubiquitinyl-[acceptor protein]-L-lysine.. With respect to regulation, activated by autophosphorylation on Thr-1400 and Thr-1412 following oligomerization. In terms of biological role, component of a protein kinase signal transduction cascade. Activates the ERK and JNK kinase pathways by phosphorylation of MAP2K1 and MAP2K4. May phosphorylate the MAPK8/JNK1 kinase. Activates CHUK and IKBKB, the central protein kinases of the NF-kappa-B pathway. In Homo sapiens (Human), this protein is Mitogen-activated protein kinase kinase kinase 1 (MAP3K1).